Reading from the N-terminus, the 359-residue chain is DNA polymerase IV (359 aa).

The 182-residue stretch at 4 to 185 (IIHIDMDCYF…LSLRKIPGVG (182 aa)) folds into the UmuC domain. D8 and D103 together coordinate Mg(2+). E104 is a catalytic residue.

This sequence belongs to the DNA polymerase type-Y family. As to quaternary structure, monomer. The cofactor is Mg(2+).

It localises to the cytoplasm. The enzyme catalyses DNA(n) + a 2'-deoxyribonucleoside 5'-triphosphate = DNA(n+1) + diphosphate. Its function is as follows. Poorly processive, error-prone DNA polymerase involved in untargeted mutagenesis. Copies undamaged DNA at stalled replication forks, which arise in vivo from mismatched or misaligned primer ends. These misaligned primers can be extended by PolIV. Exhibits no 3'-5' exonuclease (proofreading) activity. May be involved in translesional synthesis, in conjunction with the beta clamp from PolIII. In Shewanella sp. (strain MR-4), this protein is DNA polymerase IV.